We begin with the raw amino-acid sequence, 542 residues long: Formate--tetrahydrofolate ligase (542 aa).

53 to 60 (TPAGEGKT) is an ATP binding site.

This sequence belongs to the formate--tetrahydrofolate ligase family.

The catalysed reaction is (6S)-5,6,7,8-tetrahydrofolate + formate + ATP = (6R)-10-formyltetrahydrofolate + ADP + phosphate. The protein operates within one-carbon metabolism; tetrahydrofolate interconversion. This chain is Formate--tetrahydrofolate ligase, found in Thermotoga maritima (strain ATCC 43589 / DSM 3109 / JCM 10099 / NBRC 100826 / MSB8).